The primary structure comprises 138 residues: Transcription antitermination protein NusB (138 aa).

Belongs to the NusB family.

In terms of biological role, involved in transcription antitermination. Required for transcription of ribosomal RNA (rRNA) genes. Binds specifically to the boxA antiterminator sequence of the ribosomal RNA (rrn) operons. This Photorhabdus laumondii subsp. laumondii (strain DSM 15139 / CIP 105565 / TT01) (Photorhabdus luminescens subsp. laumondii) protein is Transcription antitermination protein NusB.